A 357-amino-acid chain; its full sequence is MASLTDLVNLDLSDCTDRIIAEYIWIGGTGIDLRSKARTVKGPITDPIQLPKWNYDGSSTGQAPGEDSEVILYPQAIFKDPFRKGNHILVMCDCYTPQGEPIPTNKRYSAAKVFSHPDVAAEVPWYGIEQEYTLLQKDVSWPLGWPVGGYPGPQGPYYCAAGADKAFGRDVVDAHYKACLYAGINISGINGEVMPGQWEFQVGPSVGISAGDEIWVARYILERITEMAGIVLSLDPKPIKGDWNGAGAHTNYSTKSMREAGGYEVIKAAIDKLGKRHKEHIAAYGEGNERRLTGRHETADINTFKWGVANRGASIRVGRDTEREGKGYFEDRRPASNMDPYVVTGMIAETTILWNGN.

The region spanning 19 to 99 (IIAEYIWIGG…VMCDCYTPQG (81 aa)) is the GS beta-grasp domain. Positions 106–357 (KRYSAAKVFS…AETTILWNGN (252 aa)) constitute a GS catalytic domain.

This sequence belongs to the glutamine synthetase family. As to quaternary structure, homooctamer. In terms of tissue distribution, found mainly in the cortical tissues of seedling roots, and in the root tip.

Its subcellular location is the cytoplasm. It catalyses the reaction L-glutamate + NH4(+) + ATP = L-glutamine + ADP + phosphate + H(+). In terms of biological role, plays a role in the flow of nitrogen into nitrogenous organic compounds. This is Glutamine synthetase root isozyme 1 (GLN6) from Zea mays (Maize).